A 469-amino-acid polypeptide reads, in one-letter code: Cysteine--tRNA ligase (469 aa).

Cysteine 33 provides a ligand contact to Zn(2+). A 'HIGH' region motif is present at residues 35-45 (ATVQGLPHIGH). 3 residues coordinate Zn(2+): cysteine 211, histidine 236, and glutamate 240. Residues 267–271 (KMSKS) carry the 'KMSKS' region motif. Lysine 270 is an ATP binding site.

Belongs to the class-I aminoacyl-tRNA synthetase family. Monomer. The cofactor is Zn(2+).

Its subcellular location is the cytoplasm. The catalysed reaction is tRNA(Cys) + L-cysteine + ATP = L-cysteinyl-tRNA(Cys) + AMP + diphosphate. The chain is Cysteine--tRNA ligase (cysS) from Mycobacterium bovis (strain ATCC BAA-935 / AF2122/97).